Consider the following 135-residue polypeptide: UPF0355 protein SE_2351 (135 aa).

It belongs to the UPF0355 family.

The sequence is that of UPF0355 protein SE_2351 from Staphylococcus epidermidis (strain ATCC 12228 / FDA PCI 1200).